A 1060-amino-acid chain; its full sequence is MPKRTDIRKILVIGSGPIVIGQAAEFDYSGTQACLALKEEGYQVVLINSNPATIMTDKTVADTVYIEPITLDFVTQILRKELPDAILPTLGGQTGLNMALELANCGILAELNIELLGTKLSAIDQAEDRELFKNLMNQLNEPIPESAIAHSLDDAQEFVKQNGFPVIIRPAFTLGGTGGGIAENAGQLKTIVKNGIALSPVGQVLVEQSIAGYKEIEFEVMRDRNDNALVVCNMENFDPVGIHTGDSIVFAPVQTLSDREVQMLRDASLKIIRALKIEGGCNVQLALDPNSERYFIIEVNPRVSRSSALASKATGYPIAKMAAKIAVGLTLDEIYNPITGTTYAQFEPMLDYVVAKIPRWPFDKFNKGDRQLGTQMKATGEVMAIGRNIEESLLKAVRSLEIGTAHLELDGLTSVSDNDLVQRIIHPQDDRLFYLAEALRRGYLIQELAELTKIDLFFLDKISHIVELEEQLRSEKGDVELLEIVKKNGFSDEKIAKTWQITPIQVRQMRQESGIQPVYKMVDTCAAEFESQTPYYYTTYEQENESLVSAKPSILVIGSGPIRIGQGVEFDYATVHCVQAIQKAGYEAIIMNSNPETVSTDFSISDKLYFEPLTLEDVLNVVELEKPEGVIVQFGGQTAINLAAPLEENGVKILGTSVANLDRAEDRDLFDQLIQELNIPQPVGKTATNAPDALTIATEIGYPVLIRPSFVLGGRAMEIVHTPEDLTHYMQEAVKVSDEHPVLIDRYLMGKECEVDAICDGQEVLIPGIMEHIERAGVHSGDSMAVYPPQNLTEDQKAAIIDYTTKLCLALDCHGLLNIQFIIQNDEVYVIEVNPRASRTVPFLSKVTQIPMAQLATQLILGSTLAELKSPTGLLPAGPLIHVKAPVFSFSKLTRVDSLLGPEMKSTGEVMGTDVTMQKALYKAFEASGMHLPSHGNVLMTVTNQDKAQALALAERFREVGYQIIATPGTTQQFKAAGIPVQQVDKINATSGDLLDKIKAGHIQLVINTTGLNEAPQVAKDSIVIRQTAIEHGIPLLTSLDTTDAILTVLESQSLLTKPL.

Positions 1–401 (MPKRTDIRKI…SLLKAVRSLE (401 aa)) are carboxyphosphate synthetic domain. Arg129, Arg169, Gly175, Gly176, Gln208, Ile210, Glu215, Gly241, Ile242, His243, Gln284, and Glu298 together coordinate ATP. The 195-residue stretch at 133–327 (KNLMNQLNEP…IAKMAAKIAV (195 aa)) folds into the ATP-grasp 1 domain. Residues Gln284, Glu298, and Asn300 each contribute to the Mg(2+) site. Mn(2+)-binding residues include Gln284, Glu298, and Asn300. Residues 402-546 (IGTAHLELDG…YTTYEQENES (145 aa)) form an oligomerization domain region. The carbamoyl phosphate synthetic domain stretch occupies residues 547 to 929 (LVSAKPSILV…ALYKAFEASG (383 aa)). Positions 671–861 (DQLIQELNIP…MAQLATQLIL (191 aa)) constitute an ATP-grasp 2 domain. Positions 707, 746, 748, 752, 777, 778, 779, 780, 820, and 832 each coordinate ATP. Mg(2+)-binding residues include Gln820, Glu832, and Asn834. The Mn(2+) site is built by Gln820, Glu832, and Asn834. The MGS-like domain maps to 930 to 1060 (MHLPSHGNVL…ESQSLLTKPL (131 aa)). Residues 930-1060 (MHLPSHGNVL…ESQSLLTKPL (131 aa)) form an allosteric domain region.

The protein belongs to the CarB family. As to quaternary structure, composed of two chains; the small (or glutamine) chain promotes the hydrolysis of glutamine to ammonia, which is used by the large (or ammonia) chain to synthesize carbamoyl phosphate. Tetramer of heterodimers (alpha,beta)4. It depends on Mg(2+) as a cofactor. Mn(2+) is required as a cofactor.

It catalyses the reaction hydrogencarbonate + L-glutamine + 2 ATP + H2O = carbamoyl phosphate + L-glutamate + 2 ADP + phosphate + 2 H(+). It carries out the reaction hydrogencarbonate + NH4(+) + 2 ATP = carbamoyl phosphate + 2 ADP + phosphate + 2 H(+). Its pathway is amino-acid biosynthesis; L-arginine biosynthesis; carbamoyl phosphate from bicarbonate: step 1/1. It functions in the pathway pyrimidine metabolism; UMP biosynthesis via de novo pathway; (S)-dihydroorotate from bicarbonate: step 1/3. Large subunit of the glutamine-dependent carbamoyl phosphate synthetase (CPSase). CPSase catalyzes the formation of carbamoyl phosphate from the ammonia moiety of glutamine, carbonate, and phosphate donated by ATP, constituting the first step of 2 biosynthetic pathways, one leading to arginine and/or urea and the other to pyrimidine nucleotides. The large subunit (synthetase) binds the substrates ammonia (free or transferred from glutamine from the small subunit), hydrogencarbonate and ATP and carries out an ATP-coupled ligase reaction, activating hydrogencarbonate by forming carboxy phosphate which reacts with ammonia to form carbamoyl phosphate. This is Carbamoyl phosphate synthase large chain from Latilactobacillus sakei subsp. sakei (strain 23K) (Lactobacillus sakei subsp. sakei).